The chain runs to 226 residues: MSRVRLVIAQCTVDYIGRLTAHLPSARRLLLFKADGSVSVHADDRAYKPLNWMSPPCWLTEESGGQAPVWVVENKAGEQLRITIEGIEHDSSHELGVDPGLVKDGVEAHLQALLAEHIQLLGEGYTLVRREYMTAIGPVDLLCSDERGGSVAVEIKRRGEIDGVEQLTRYLELLNRDSVLAPVKGVFAAQQIKPQARILATDRGIRCLTLDYDTMRGMDSGEYRLF.

This sequence belongs to the NucS endonuclease family.

It localises to the cytoplasm. Cleaves both 3' and 5' ssDNA extremities of branched DNA structures. The protein is Endonuclease NucS of Mycobacterium tuberculosis (strain ATCC 25618 / H37Rv).